A 420-amino-acid chain; its full sequence is Protein disulfide isomerase CRELD1 (420 aa).

A signal peptide spans 1-29; the sequence is MAPRSSRGIAPAMLCGLSLFLGFPGLVWV. Topologically, residues 30-362 are extracellular; that stretch reads QISVPPQSSP…GFFSEMTEDE (333 aa). A CXXC motif is present at residues 46-49; the sequence is CHTC. Cystine bridges form between Cys46–Cys49, Cys155–Cys169, Cys163–Cys181, and Cys183–Cys192. Positions 153–193 constitute an EGF-like 1 domain; that stretch reads LPCPGGAERPCGGYGHCEGEGTRGGSGHCDCQAGYGGEACG. Asn205 carries an N-linked (GlcNAc...) asparagine glycan. 2 FU repeats span residues 208–255 and 268–315; these read HLVC…ERAS and SYEC…AVCP. The short motif at 278 to 281 is the CXXC element; sequence CLGC. 4 cysteine pairs are disulfide-bonded: Cys278–Cys281, Cys309–Cys321, Cys314–Cys330, and Cys332–Cys343. One can recognise an EGF-like 2; calcium-binding domain in the interval 305 to 344; it reads DVDECETAVCPGENQQCENTEGSYRCICADGYKQMEGICV. Residues 363–383 form a helical membrane-spanning segment; the sequence is LVVLQQMFFGVIICALATLAA. A topological domain (cytoplasmic) is located at residue Lys384. Residues 385–405 form a helical membrane-spanning segment; that stretch reads GDLVFTAIFIGAVAAMTGYWL. The Extracellular portion of the chain corresponds to 406-420; that stretch reads SERSDRVLEGFIKGR.

This sequence belongs to the CRELD family.

Its subcellular location is the membrane. It carries out the reaction Catalyzes the rearrangement of -S-S- bonds in proteins.. Functionally, protein disulfide isomerase. Promotes the localization of acetylcholine receptors (AChRs) to the plasma membrane. The chain is Protein disulfide isomerase CRELD1 (CRELD1) from Bos taurus (Bovine).